A 54-amino-acid chain; its full sequence is U7-ctenitoxin-Pk1a (54 aa).

5 disulfides stabilise this stretch: Cys-3-Cys-17, Cys-10-Cys-23, Cys-14-Cys-52, Cys-16-Cys-37, and Cys-25-Cys-35.

In terms of tissue distribution, expressed by the venom gland.

It is found in the secreted. Blocks voltage-gated sodium channels (Nav). Causes immediate spastic paralysis and death in mice within 1 minute of injection at dose levels of 1.5 ug per mouse. The protein is U7-ctenitoxin-Pk1a of Phoneutria keyserlingi (Brazilian wandering spider).